The primary structure comprises 386 residues: Galactokinase (386 aa).

Residue 35-38 (EHTD) participates in substrate binding. Residues S69 and 125–131 (GAGLSSS) contribute to the ATP site. Residues S131 and E163 each coordinate Mg(2+). D175 functions as the Proton acceptor in the catalytic mechanism. Y224 provides a ligand contact to substrate.

The protein belongs to the GHMP kinase family. GalK subfamily.

Its subcellular location is the cytoplasm. The catalysed reaction is alpha-D-galactose + ATP = alpha-D-galactose 1-phosphate + ADP + H(+). It participates in carbohydrate metabolism; galactose metabolism. In terms of biological role, catalyzes the transfer of the gamma-phosphate of ATP to D-galactose to form alpha-D-galactose-1-phosphate (Gal-1-P). This Vibrio parahaemolyticus serotype O3:K6 (strain RIMD 2210633) protein is Galactokinase.